An 85-amino-acid chain; its full sequence is RNA-binding protein Hfq (85 aa).

One can recognise a Sm domain in the interval 10 to 69 (DPFLNILRKEHVPVSIYLVNGIKLQGQIESFDQYVVLLKNTVTQMVYKHAISTVVPARPV).

It belongs to the Hfq family. As to quaternary structure, homohexamer.

RNA chaperone that binds small regulatory RNA (sRNAs) and mRNAs to facilitate mRNA translational regulation in response to envelope stress, environmental stress and changes in metabolite concentrations. Also binds with high specificity to tRNAs. This Laribacter hongkongensis (strain HLHK9) protein is RNA-binding protein Hfq.